The chain runs to 231 residues: Chalcone--flavanone isomerase (231 aa).

Residues threonine 46, asparagine 112, and serine 189 each coordinate substrate.

This sequence belongs to the chalcone isomerase family.

The enzyme catalyses a chalcone = a flavanone.. It participates in secondary metabolite biosynthesis; flavonoid biosynthesis. Functionally, catalyzes the intramolecular cyclization of bicyclic chalcones into tricyclic (S)-flavanones. Responsible for the isomerization of 4,2',4',6'-tetrahydroxychalcone (also termed chalcone) into naringenin. This Hordeum vulgare (Barley) protein is Chalcone--flavanone isomerase (CHI).